The following is a 97-amino-acid chain: Exodeoxyribonuclease 7 small subunit (97 aa).

The interval 1–22 (MAKTASPGDTAAGNGTEPLPDK) is disordered.

The protein belongs to the XseB family. In terms of assembly, heterooligomer composed of large and small subunits.

Its subcellular location is the cytoplasm. The enzyme catalyses Exonucleolytic cleavage in either 5'- to 3'- or 3'- to 5'-direction to yield nucleoside 5'-phosphates.. Its function is as follows. Bidirectionally degrades single-stranded DNA into large acid-insoluble oligonucleotides, which are then degraded further into small acid-soluble oligonucleotides. This chain is Exodeoxyribonuclease 7 small subunit, found in Burkholderia vietnamiensis (strain G4 / LMG 22486) (Burkholderia cepacia (strain R1808)).